The chain runs to 730 residues: Elongation factor 2 (730 aa).

One can recognise a tr-type G domain in the interval Lys-19–Phe-260. Residues Ala-28 to Thr-35, Asp-94 to His-98, and Asn-148 to Asp-151 each bind GTP. Position 597 is a diphthamide (His-597).

It belongs to the TRAFAC class translation factor GTPase superfamily. Classic translation factor GTPase family. EF-G/EF-2 subfamily.

The protein localises to the cytoplasm. Its function is as follows. Catalyzes the GTP-dependent ribosomal translocation step during translation elongation. During this step, the ribosome changes from the pre-translocational (PRE) to the post-translocational (POST) state as the newly formed A-site-bound peptidyl-tRNA and P-site-bound deacylated tRNA move to the P and E sites, respectively. Catalyzes the coordinated movement of the two tRNA molecules, the mRNA and conformational changes in the ribosome. The polypeptide is Elongation factor 2 (Methanosphaerula palustris (strain ATCC BAA-1556 / DSM 19958 / E1-9c)).